The sequence spans 842 residues: Leucine--tRNA ligase (842 aa).

Residues 44–55 carry the 'HIGH' region motif; it reads PYPSANGLHVGH. Positions 619-623 match the 'KMSKS' region motif; that stretch reads KMSKS. Residue lysine 622 participates in ATP binding.

This sequence belongs to the class-I aminoacyl-tRNA synthetase family.

The protein resides in the cytoplasm. It catalyses the reaction tRNA(Leu) + L-leucine + ATP = L-leucyl-tRNA(Leu) + AMP + diphosphate. The chain is Leucine--tRNA ligase from Borrelia hermsii (strain HS1 / DAH).